A 509-amino-acid chain; its full sequence is MLPALKKGGRPRDALGRFIRHHERLPVSLADTRGVLFVVSEMADFIKAGGLGDVAAALPRALRHRYDVRVLIPGYRAVLERAGKVEIVGRVLAHAALPACDIGRIVQSDGLPIYILLSRELFERDGSPYVSTSGSEFEDNAIRFATLSHAAADIAAGHAGLGWKPRLLHLNDWPCALAAGYVRWSGGTTPCLLTIHNLAYQGLVPYSMAGALGIPAERVAELEFYGQMSFLRGGIVNADHVNTVSVSYAKQITGPAQGCGLDRLLAGRAAKGALTGIVNGIDASWDPRTDEYLDSHFSVNQWQGRQDNAAQVRKAFGLRESTGPLFAVVSRLVHQKGLDLICEVAPQIVAAGGQIAVIGGGEPDIERQVAELTRRYPGQVGAFIGFEEGLARRMFAGADFLLMPSRFEPCGLSQMYAQRFGCLPIAHATGGLIDTVDDGVTGFLFQHASVEALRRCLERAFRTFRLPGLLAAMRRAAMLRPSGWDVAGNKYLSLYERTAAIAPALATVS.

Lys47 is a binding site for ADP-alpha-D-glucose.

Belongs to the glycosyltransferase 1 family. Bacterial/plant glycogen synthase subfamily.

It catalyses the reaction [(1-&gt;4)-alpha-D-glucosyl](n) + ADP-alpha-D-glucose = [(1-&gt;4)-alpha-D-glucosyl](n+1) + ADP + H(+). It functions in the pathway glycan biosynthesis; glycogen biosynthesis. Its function is as follows. Synthesizes alpha-1,4-glucan chains using ADP-glucose. The sequence is that of Glycogen synthase from Xanthomonas oryzae pv. oryzae (strain MAFF 311018).